We begin with the raw amino-acid sequence, 346 residues long: B3 domain-containing protein At3g25182 (346 aa).

The tract at residues 168 to 187 is disordered; sequence KRRAVEQRKRTGGVKKAKVA. The TF-B3 DNA-binding region spans 237 to 338; it reads FNNLLRNDFL…ILCFAMEQRS (102 aa).

It localises to the nucleus. The protein is B3 domain-containing protein At3g25182 of Arabidopsis thaliana (Mouse-ear cress).